Reading from the N-terminus, the 809-residue chain is Leucine--tRNA ligase (809 aa).

Residues 40 to 50 (PYPSGRIHMGH) carry the 'HIGH' region motif. The 'KMSKS' region signature appears at 579–583 (KMSKS). Lysine 582 provides a ligand contact to ATP.

Belongs to the class-I aminoacyl-tRNA synthetase family.

The protein localises to the cytoplasm. The catalysed reaction is tRNA(Leu) + L-leucine + ATP = L-leucyl-tRNA(Leu) + AMP + diphosphate. This chain is Leucine--tRNA ligase, found in Campylobacter jejuni (strain RM1221).